Consider the following 109-residue polypeptide: SIAFSRAVFAEFLATLIFVFFGLGSALNWQQSLPSVLQIAMAFGLAIGTLVQALGHISGAHINPAVTVACLVGCHVSFLRAAFYVAAQLLGAVAGAALLHEVTPSDVRG.

Topologically, residues Ser-1–Arg-6 are cytoplasmic. Residues Ala-7 to Leu-27 form a helical membrane-spanning segment. Topologically, residues Asn-28–Ser-35 are extracellular. Residues Val-36–Leu-54 form a helical membrane-spanning segment. The Cytoplasmic segment spans residues Gly-55–Gly-59. Positions Ala-60–Ala-69 form an intramembrane region, discontinuously helical. The NPA 1 motif lies at Asn-63 to Ala-65. Topologically, residues Cys-70–Arg-80 are cytoplasmic. Residues Ala-81 to Val-102 form a helical membrane-spanning segment. At Thr-103–Gly-109 the chain is on the extracellular side.

It belongs to the MIP/aquaporin (TC 1.A.8) family. Homotetramer. Post-translationally, serine phosphorylation is necessary and sufficient for expression at the apical membrane. Endocytosis is not phosphorylation-dependent. N-glycosylated.

The protein resides in the apical cell membrane. It localises to the basolateral cell membrane. It is found in the cell membrane. The protein localises to the cytoplasmic vesicle membrane. Its subcellular location is the golgi apparatus. The protein resides in the trans-Golgi network membrane. The catalysed reaction is H2O(in) = H2O(out). The enzyme catalyses glycerol(in) = glycerol(out). In terms of biological role, forms a water-specific channel that provides the plasma membranes of renal collecting duct with high permeability to water, thereby permitting water to move in the direction of an osmotic gradient. Plays an essential role in renal water homeostasis. Could also be permeable to glycerol. In Talpa europaea (European mole), this protein is Aquaporin-2.